A 233-amino-acid polypeptide reads, in one-letter code: Octanoyltransferase (233 aa).

Residues 32-213 (NNIDGILLLL…NFKMIFETDL (182 aa)) enclose the BPL/LPL catalytic domain. Residues 77 to 84 (RGGNVTYH), 144 to 146 (AIG), and 157 to 159 (GFA) contribute to the substrate site. Catalysis depends on Cys175, which acts as the Acyl-thioester intermediate.

The protein belongs to the LipB family.

It localises to the cytoplasm. It carries out the reaction octanoyl-[ACP] + L-lysyl-[protein] = N(6)-octanoyl-L-lysyl-[protein] + holo-[ACP] + H(+). Its pathway is protein modification; protein lipoylation via endogenous pathway; protein N(6)-(lipoyl)lysine from octanoyl-[acyl-carrier-protein]: step 1/2. Functionally, catalyzes the transfer of endogenously produced octanoic acid from octanoyl-acyl-carrier-protein onto the lipoyl domains of lipoate-dependent enzymes. Lipoyl-ACP can also act as a substrate although octanoyl-ACP is likely to be the physiological substrate. The protein is Octanoyltransferase of Clostridium kluyveri (strain ATCC 8527 / DSM 555 / NBRC 12016 / NCIMB 10680 / K1).